The sequence spans 639 residues: Mediator of RNA polymerase II transcription subunit 17 (639 aa).

The stretch at 160-187 (RLQSFNAAADKLLKSASRLENEVASETR) forms a coiled coil.

The protein belongs to the Mediator complex subunit 17 family. In terms of assembly, component of the Mediator complex.

It is found in the nucleus. Its function is as follows. Component of the Mediator complex, a coactivator involved in the regulated transcription of nearly all RNA polymerase II-dependent genes. Mediator functions as a bridge to convey information from gene-specific regulatory proteins to the basal RNA polymerase II transcription machinery. Mediator is recruited to promoters by direct interactions with regulatory proteins and serves as a scaffold for the assembly of a functional preinitiation complex with RNA polymerase II and the general transcription factors. This Aspergillus fumigatus (strain ATCC MYA-4609 / CBS 101355 / FGSC A1100 / Af293) (Neosartorya fumigata) protein is Mediator of RNA polymerase II transcription subunit 17 (srb4).